Reading from the N-terminus, the 85-residue chain is MTKDELFEKVKEIIVDTLSVDEDEVTLDASFTDDLDADSLELVDLTMAFESEFGVTIEDEELEKIKTVENAVNLLSEKLNIDDED.

The 76-residue stretch at 4 to 79 (DELFEKVKEI…NAVNLLSEKL (76 aa)) folds into the Carrier domain. The residue at position 39 (Ser-39) is an O-(pantetheine 4'-phosphoryl)serine.

This sequence belongs to the acyl carrier protein (ACP) family. In terms of processing, 4'-phosphopantetheine is transferred from CoA to a specific serine of apo-ACP by AcpS. This modification is essential for activity because fatty acids are bound in thioester linkage to the sulfhydryl of the prosthetic group.

It is found in the cytoplasm. The protein operates within lipid metabolism; fatty acid biosynthesis. Functionally, carrier of the growing fatty acid chain in fatty acid biosynthesis. The polypeptide is Acyl carrier protein (Petrotoga mobilis (strain DSM 10674 / SJ95)).